A 245-amino-acid chain; its full sequence is Protein virB1 (245 aa).

The first 28 residues, 1 to 28, serve as a signal peptide directing secretion; that stretch reads MLKATGPLSIILLASTCPSSGAAPLSFA. The interval 176–245 is disordered; it reads LVPPLTARPK…LFDLNQGGPQ (70 aa). The span at 183 to 193 shows a compositional bias: basic and acidic residues; the sequence is RPKDDREKPGS.

This sequence belongs to the virb1 family.

Its function is as follows. VirB proteins are suggested to act at the bacterial surface and there play an important role in directing T-DNA transfer to plant cells. This Agrobacterium fabrum (strain C58 / ATCC 33970) (Agrobacterium tumefaciens (strain C58)) protein is Protein virB1 (virB1).